Consider the following 427-residue polypeptide: MALKSTNGTHAGPTASAASLASLAANISEKAASLSTYLESQGHAQPSFLPGCADPPETEEYLALHTSLTSSLEDLQRLVDGPRRSLRPFIMIGNDLAALQVAFDFGFFQLIPPEGSMDVETLAHKVGIDADRTARVLRMLATHRIFVEPKPGFFAHTAASAVFHDDEELRCAGHYMLDECFKAATACSDCIKASPNDSDSTHSPFNTYFGVPMFSYYEQNPQFAARFAKAMAVDRQIAELRDCFPWGDIKGTVVDVGGGSGHISMALARNFPKLDFIVQDDSEKMLAQGRARNLSDIEGRISFMKHSFFHPQPIGGAGAFFIRQCTHNWCDRDVVKILKSFVPGLENSAPGTPLLINDTVLPVPGSKPLHEERALRQMDMLMFVVLGAKQRTAKEFEALLKEADARYEIRRVHADGSMGLVEVHLNI.

Residue aspartate 281 participates in S-adenosyl-L-methionine binding. The Proton acceptor role is filled by histidine 327.

It belongs to the class I-like SAM-binding methyltransferase superfamily. Cation-independent O-methyltransferase family. COMT subfamily.

It functions in the pathway phytotoxin biosynthesis. Functionally, O-methyltransferase; part of the gene cluster that mediates the biosynthesis of the phytotoxin solanapyrone, a causal agent of early blight disease of potato and tomato. The prosolanapyrone synthase sol1 is a polyketide synthase that produces the octaketide desmethylprosolanapyrone I via sequential condensations of 7 malonyl-CoA units with one acetyl-CoA unit, and one methylation step. The octaketide backbone is further methylated by the sol2 O-methyltransferase to yield prosolanapyrone I. Prosolanapyrone I is hydroxylated to prosolanapyrone II by the cytochrome P450 monooxygenase sol6. The solanapyrone synthase sol5 then catalyzes the oxidation of prosolanapyrone II and the subsequent Diels Alder cycloisomerization of the product prosolanapyrone III to solanapyrones A and D. Solanapyrones A and D are then converted into solanapyrones B and E, respectively, by the sol3 dehydrogenase. This Alternaria solani protein is O-methyltransferase sol2 (sol2).